The sequence spans 616 residues: KIF-binding protein (616 aa).

Residues 52 to 78 (EEEEESEAEGKEERRDGPESGGRRGES) are disordered. The span at 59 to 78 (AEGKEERRDGPESGGRRGES) shows a compositional bias: basic and acidic residues.

This sequence belongs to the KIF-binding protein family.

Its subcellular location is the cytoplasm. The protein localises to the cytoskeleton. Its function is as follows. Activator of KIF1B plus-end-directed microtubule motor activity. Required for organization of axonal microtubules, and axonal outgrowth and maintenance during peripheral and central nervous system development. The protein is KIF-binding protein of Xenopus tropicalis (Western clawed frog).